The following is a 457-amino-acid chain: Zinc finger protein ZPR1 (457 aa).

Over residues 1–13 (MSTVSDPNSSNPP) the composition is skewed to polar residues. Residues 1–21 (MSTVSDPNSSNPPESAGNIRP) form a disordered region. C4-type zinc fingers lie at residues 43–75 (CMNCFETGVTRLLPTKIPFFREVVLMSFKCDHC) and 261–293 (CPSCQAPCETNMKLTNIPHFKEVVIMATVCGAC). The segment at 414–457 (VQSLSDDDSEPDDKLTVERYDRSYEDNEDLGLNDMKTEGYEEKA) is disordered. Basic and acidic residues-rich tracts occupy residues 425 to 438 (DDKLTVERYDRSYE) and 448 to 457 (MKTEGYEEKA).

The protein belongs to the ZPR1 family.

In terms of biological role, might mediate EGFR and FGFR signal transduction cascades required for lumen formation in tracheal cells. The chain is Zinc finger protein ZPR1 from Drosophila melanogaster (Fruit fly).